We begin with the raw amino-acid sequence, 283 residues long: Isochorismatase domain-containing protein 1 (283 aa).

The protein belongs to the isochorismatase family.

The polypeptide is Isochorismatase domain-containing protein 1 (isoc1) (Salmo salar (Atlantic salmon)).